The primary structure comprises 821 residues: Leucine--tRNA ligase (821 aa).

The 'HIGH' region signature appears at 40 to 50 (PYPSGRIHMGH). A 'KMSKS' region motif is present at residues 586-590 (KMSKS). An ATP-binding site is contributed by Lys-589.

The protein belongs to the class-I aminoacyl-tRNA synthetase family.

The protein localises to the cytoplasm. It carries out the reaction tRNA(Leu) + L-leucine + ATP = L-leucyl-tRNA(Leu) + AMP + diphosphate. This Aliarcobacter butzleri (strain RM4018) (Arcobacter butzleri) protein is Leucine--tRNA ligase.